A 206-amino-acid polypeptide reads, in one-letter code: Large ribosomal subunit protein uL4 (206 aa).

It belongs to the universal ribosomal protein uL4 family. Part of the 50S ribosomal subunit.

In terms of biological role, one of the primary rRNA binding proteins, this protein initially binds near the 5'-end of the 23S rRNA. It is important during the early stages of 50S assembly. It makes multiple contacts with different domains of the 23S rRNA in the assembled 50S subunit and ribosome. Functionally, forms part of the polypeptide exit tunnel. This chain is Large ribosomal subunit protein uL4, found in Cereibacter sphaeroides (strain ATCC 17025 / ATH 2.4.3) (Rhodobacter sphaeroides).